A 67-amino-acid chain; its full sequence is Moricin (67 aa).

Positions 1–23 are cleaved as a signal peptide; it reads MKLTSLFIFVIVALSLLFSSTDA.

The protein belongs to the moricin family. Monomer.

The protein resides in the secreted. Antimicrobial peptide. Active against a broad spectrum of Gram-positive and Gram-negative bacteria including methicillin-resistant S.aureus ATCC 43 300, S.aureus BAA-39, pathogenic strains of L.monocytogenes, K.pneumoniae, E.coli O157:H7, S.typhimurium and multidrug-resistant S.typhimurium DT104 with minimum inhibitory concentration (MIC) of 1.4 uM for all except for S.aureus BAA-39. Also active against Serratia marcescens. Probably acts by disturbing membrane functions with its amphipathic alpha-helical structure. May protect a developing embryo from bacterial infection. This is Moricin from Manduca sexta (Tobacco hawkmoth).